A 371-amino-acid polypeptide reads, in one-letter code: UDP-N-acetylglucosamine--N-acetylmuramyl-(pentapeptide) pyrophosphoryl-undecaprenol N-acetylglucosamine transferase (371 aa).

UDP-N-acetyl-alpha-D-glucosamine-binding positions include 10–12 (TGG), asparagine 124, arginine 165, serine 197, isoleucine 251, and glutamine 296.

This sequence belongs to the glycosyltransferase 28 family. MurG subfamily.

Its subcellular location is the cell membrane. It carries out the reaction di-trans,octa-cis-undecaprenyl diphospho-N-acetyl-alpha-D-muramoyl-L-alanyl-D-glutamyl-meso-2,6-diaminopimeloyl-D-alanyl-D-alanine + UDP-N-acetyl-alpha-D-glucosamine = di-trans,octa-cis-undecaprenyl diphospho-[N-acetyl-alpha-D-glucosaminyl-(1-&gt;4)]-N-acetyl-alpha-D-muramoyl-L-alanyl-D-glutamyl-meso-2,6-diaminopimeloyl-D-alanyl-D-alanine + UDP + H(+). The protein operates within cell wall biogenesis; peptidoglycan biosynthesis. In terms of biological role, cell wall formation. Catalyzes the transfer of a GlcNAc subunit on undecaprenyl-pyrophosphoryl-MurNAc-pentapeptide (lipid intermediate I) to form undecaprenyl-pyrophosphoryl-MurNAc-(pentapeptide)GlcNAc (lipid intermediate II). In Carboxydothermus hydrogenoformans (strain ATCC BAA-161 / DSM 6008 / Z-2901), this protein is UDP-N-acetylglucosamine--N-acetylmuramyl-(pentapeptide) pyrophosphoryl-undecaprenol N-acetylglucosamine transferase.